The sequence spans 409 residues: Na(+)/H(+) antiporter NhaA (409 aa).

A run of 11 helical transmembrane segments spans residues 13-33 (SGGI…NTFL), 58-78 (LILW…GLEL), 93-113 (IALP…IFYL), 120-140 (FALG…LGIL), 153-173 (IFLM…IALF), 176-196 (SELS…LFAL), 216-236 (VAVL…AFFI), 256-276 (LHGW…AGIS), 279-299 (GVGL…GLFV), 326-346 (FIQL…SLFI), and 363-383 (LAIL…LKFS).

The protein belongs to the NhaA Na(+)/H(+) (TC 2.A.33) antiporter family.

Its subcellular location is the cell inner membrane. The enzyme catalyses Na(+)(in) + 2 H(+)(out) = Na(+)(out) + 2 H(+)(in). Its function is as follows. Na(+)/H(+) antiporter that extrudes sodium in exchange for external protons. This is Na(+)/H(+) antiporter NhaA from Campylobacter concisus (strain 13826).